Reading from the N-terminus, the 1353-residue chain is Ankyrin repeat domain-containing protein 36B (1353 aa).

6 ANK repeats span residues 19–48 (YHLKRIHRAVLRGNLEKLKYLLLTYYDANK), 52–81 (KERTALHLACATGQPEMVHLLVSRRCELNL), 85–114 (EDRTPLIKAVQLRQEACATLLLQNGADPNI), 118–147 (FGRTALHYAVYNEDTSMIEKLLSHGTNIEE), 151–180 (NEYQPLLLAVSRRKVKMVEFLLKKKANVNA), and 184–213 (LGRSALILAVTLGEKDIVILLLQHNIDVFS). Disordered regions lie at residues 249-307 (PINS…KDSV) and 349-607 (MGGG…KATS). The span at 250–259 (INSNPVSPQK) shows a compositional bias: polar residues. Basic and acidic residues-rich tracts occupy residues 260-272 (QRAEKATSDDKDS) and 295-306 (PAEKATSDEKDS). Composition is skewed to polar residues over residues 355–367 (GTVSSQKQPASKT) and 389–400 (GTVSSQKQQALK). 2 stretches are compositionally biased toward basic and acidic residues: residues 436 to 455 (TSDEKDSFSNITREKKDGEI) and 471 to 491 (SVKEDSVLNIAREKKDGEKSR). Positions 579-600 (VSNIPTEIKDGQQSGTVSSQKQ) are enriched in polar residues. Coiled coils occupy residues 731 to 762 (AEQDLEMASEGEQKRLEEYENNQPQVKNQIHS), 821 to 908 (IKLK…YRIE), 937 to 1055 (SETD…DHDQ), and 1119 to 1344 (VFEH…LQHS).

Belongs to the ANKRD36 family.

This Homo sapiens (Human) protein is Ankyrin repeat domain-containing protein 36B (ANKRD36B).